Consider the following 1146-residue polypeptide: Error-prone DNA polymerase (1146 aa).

Disordered regions lie at residues 1–43 (MGWG…WSRK) and 154–178 (ATPEFEHAAAPDSAPRTGEPDPPGP). Over residues 12–26 (ELERVLSGRPGRTDP) the composition is skewed to basic and acidic residues.

The protein belongs to the DNA polymerase type-C family. DnaE2 subfamily.

It localises to the cytoplasm. It carries out the reaction DNA(n) + a 2'-deoxyribonucleoside 5'-triphosphate = DNA(n+1) + diphosphate. DNA polymerase involved in damage-induced mutagenesis and translesion synthesis (TLS). It is not the major replicative DNA polymerase. This chain is Error-prone DNA polymerase, found in Nocardia farcinica (strain IFM 10152).